The primary structure comprises 189 residues: UPF0301 protein CTA_0231 (189 aa).

The protein belongs to the UPF0301 (AlgH) family.

This is UPF0301 protein CTA_0231 from Chlamydia trachomatis serovar A (strain ATCC VR-571B / DSM 19440 / HAR-13).